The sequence spans 287 residues: Universal stress protein Slr1230 (287 aa).

The protein belongs to the universal stress protein A family.

This is Universal stress protein Slr1230 from Synechocystis sp. (strain ATCC 27184 / PCC 6803 / Kazusa).